A 364-amino-acid chain; its full sequence is 3'(2'),5'-bisphosphate nucleotidase 1 (364 aa).

The active-site Proton acceptor is Asp-54. Residues Glu-77, Asp-141, Ile-143, and Asp-144 each contribute to the Mg(2+) site. Thr-146 functions as the Proton acceptor in the catalytic mechanism. The adenosine 3',5'-bisphosphate site is built by Thr-146, His-243, Ser-272, Lys-275, Arg-289, and Asp-302. Positions 243, 272, 275, 289, and 302 each coordinate AMP. Residue Asp-302 participates in Mg(2+) binding.

It belongs to the inositol monophosphatase superfamily. Requires Mg(2+) as cofactor.

It carries out the reaction 3'-phosphoadenylyl sulfate + H2O = adenosine 5'-phosphosulfate + phosphate. The catalysed reaction is adenosine 3',5'-bisphosphate + H2O = AMP + phosphate. The enzyme catalyses adenosine 2',5'-bisphosphate + H2O = AMP + phosphate. Functionally, phosphatase that converts adenosine 3'-phosphate 5'-phosphosulfate (PAPS) to adenosine 5'-phosphosulfate (APS) and 3'(2')-phosphoadenosine 5'-phosphate (PAP) to AMP. Regulates the flux of sulfur in the sulfur-activation pathway by converting PAPS to APS. Involved in salt tolerance. This chain is 3'(2'),5'-bisphosphate nucleotidase 1 (HAL21), found in Candida albicans (strain WO-1) (Yeast).